Consider the following 163-residue polypeptide: Nucleotide-binding protein DET1318 (163 aa).

Belongs to the YajQ family.

Functionally, nucleotide-binding protein. In Dehalococcoides mccartyi (strain ATCC BAA-2266 / KCTC 15142 / 195) (Dehalococcoides ethenogenes (strain 195)), this protein is Nucleotide-binding protein DET1318.